Reading from the N-terminus, the 299-residue chain is Very long chain fatty acid elongase 5 (299 aa).

N-acetylmethionine is present on M1. Helical transmembrane passes span 26 to 46 (WFLL…LLIV), 64 to 84 (ILVV…YELV), 112 to 132 (VLWW…FFIL), 139 to 158 (ITVL…WFVM), 168 to 187 (FGAT…YGLS), 205 to 225 (GQLV…IWPC), and 227 to 247 (FPLG…ALFT).

This sequence belongs to the ELO family. ELOVL5 subfamily. Interacts with TECR. As to expression, highly expressed in lung and brain.

It localises to the endoplasmic reticulum membrane. It is found in the cell projection. The protein localises to the dendrite. It catalyses the reaction a very-long-chain acyl-CoA + malonyl-CoA + H(+) = a very-long-chain 3-oxoacyl-CoA + CO2 + CoA. It carries out the reaction (6Z,9Z,12Z,15Z)-octadecatetraenoyl-CoA + malonyl-CoA + H(+) = (8Z,11Z,14Z,17Z)-3-oxoicosatetraenoyl-CoA + CO2 + CoA. The catalysed reaction is (6Z,9Z,12Z)-octadecatrienoyl-CoA + malonyl-CoA + H(+) = (8Z,11Z,14Z)-3-oxoeicosatrienoyl-CoA + CO2 + CoA. The enzyme catalyses (5Z,8Z,11Z,14Z,17Z)-eicosapentaenoyl-CoA + malonyl-CoA + H(+) = 3-oxo-(7Z,10Z,13Z,16Z,19Z)-docosapentaenoyl-CoA + CO2 + CoA. It catalyses the reaction (5Z,8Z,11Z,14Z)-eicosatetraenoyl-CoA + malonyl-CoA + H(+) = (7Z,10Z,13Z,16Z)-3-oxodocosatetraenoyl-CoA + CO2 + CoA. It carries out the reaction (9Z,12Z,15Z)-octadecatrienoyl-CoA + malonyl-CoA + H(+) = (11Z,14Z,17Z)-3-oxoeicosatrienoyl-CoA + CO2 + CoA. The catalysed reaction is (9Z)-hexadecenoyl-CoA + malonyl-CoA + H(+) = 3-oxo-(11Z)-octadecenoyl-CoA + CO2 + CoA. The enzyme catalyses (9Z)-octadecenoyl-CoA + malonyl-CoA + H(+) = 3-oxo-(11Z)-eicosenoyl-CoA + CO2 + CoA. It catalyses the reaction (11Z)-octadecenoyl-CoA + malonyl-CoA + H(+) = 3-oxo-(13Z)-eicosenoyl-CoA + CO2 + CoA. It carries out the reaction (9Z,12Z)-octadecadienoyl-CoA + malonyl-CoA + H(+) = (11Z,14Z)-3-oxoicosa-11,14-dienoyl-CoA + CO2 + CoA. Its pathway is lipid metabolism; polyunsaturated fatty acid biosynthesis. Catalyzes the first and rate-limiting reaction of the four reactions that constitute the long-chain fatty acids elongation cycle. This endoplasmic reticulum-bound enzymatic process allows the addition of 2 carbons to the chain of long- and very long-chain fatty acids (VLCFAs) per cycle. Condensing enzyme that acts specifically toward polyunsaturated acyl-CoA with the higher activity toward C18:3(n-6) acyl-CoA. May participate in the production of monounsaturated and of polyunsaturated VLCFAs of different chain lengths that are involved in multiple biological processes as precursors of membrane lipids and lipid mediators. In conditions where the essential linoleic and alpha linoleic fatty acids are lacking it is also involved in the synthesis of Mead acid from oleic acid. The sequence is that of Very long chain fatty acid elongase 5 from Rattus norvegicus (Rat).